The primary structure comprises 632 residues: MGWASFNLTWAWFLPVIVYGALPLLRLPQQTQAKTELFLTALSVLFMFISATVYKISMGYSVIVLLVGYTALATLSLAKLKVMQGDKFIIASLLCIILLIFFFIVYPTLAIFVSMFYDGDTFAPQQVMRILTQSYIVRVITNSLFLSGFVGIVSTVFGLAFALYTTRIARRTAFIGKIFSILPIVTPPFVVGLGVTLMLGRSGYVTEFLSTNFGFSSHNWLYGFNGIAIAQILAFAPISFMILDGALKSVHPSIEEASYTLRANRYQTFYQIIFPLLRPALANSFLIVFIQSLADFSNPLVLGGSFDVIATQIYFYIAGSQLDYASASTLGSMLLIFSLAIFIIQYIWIGNRSYVTVSGKSYRGDVQELPNGLKYTIIGMLGFWVIFNMALYGSIFYGSFTVNWGVNYTLTLKNYAMLFGQGLSDGAWPSLINTLIYAGIAAPLTAFFGLLIAYIVVRKDFQGKKSLEFLTMLCFAVPGTVAGVSYILAFNNAPLYITGTGIIVIISMVMRDLPIGMRAAIAGLGQLDKSLDEASLSLKGSSWKTLCFIVLPLLKPALLSALVTSFVRAMTTVSAIIFLVTADTRVYRIYFKSCGRRRIRHCDCIRFYFNCCDDGNYFVFRLDCRRYAYFPF.

The next 15 membrane-spanning stretches (helical) occupy residues 5–25 (SFNL…LPLL), 37–57 (LFLT…YKIS), 58–78 (MGYS…LSLA), 93–113 (LLCI…AIFV), 144–164 (LFLS…FALY), 178–198 (IFSI…VTLM), 223–243 (GFNG…FMIL), 270–290 (YQII…IVFI), 299–319 (PLVL…YIAG), 330–350 (LGSM…IWIG), 377–397 (IIGM…SIFY), 436–456 (IYAG…AYIV), 469–489 (FLTM…YILA), 490–510 (FNNA…SMVM), and 547–567 (CFIV…TSFV). Residues 140–345 (ITNSLFLSGF…IFSLAIFIIQ (206 aa)) form the ABC transmembrane type-1 1 domain. In terms of domain architecture, ABC transmembrane type-1 2 spans 431–632 (LINTLIYAGI…DCRRYAYFPF (202 aa)).

This sequence belongs to the binding-protein-dependent transport system permease family. FbpB subfamily. In terms of assembly, the complex is composed of two ATP-binding proteins (FbpC), two transmembrane proteins (FbpB) and a solute-binding protein (FbpA).

The protein resides in the cell inner membrane. Its function is as follows. Part of the ABC transporter complex FbpABC (TC 3.A.1.10.1) involved in Fe(3+) ions import. Probably responsible for the translocation of the substrate across the membrane. In Haemophilus influenzae (strain ATCC 51907 / DSM 11121 / KW20 / Rd), this protein is Putative ferric transport system permease protein FbpB 1 (fbpB1).